Here is a 467-residue protein sequence, read N- to C-terminus: MLEKISDTLTFECETGNYHTFCPISCVAWLYQKIEDSFFLVVGTKTCGYFLQNALGVMIFAEPRYAMAELEEGDISAQLNDYEELKRLCIQIKKDRNPSVIVWIGTCTTEIIKMDLEGMAPKLEAEIGIPIVVARANGLDYAFTQGEDTVLAAIVHRCPDYKLQNKTDLTDNDIQEDATRFSFLKLRKNNIRSISATNSHPPLVLFGSLPTTVSSQLNLELKRNQIEVSGWLPTQRYTDLPSLGEGVYVCGVNPFLSRTATTLMRRKKCKLISAPFPIGPDGTRAWIEKICNVFNIQPTGLEERENKIWDGLEDYLDLVRGKSVFFMGDNLLEISLARFLIRCGMIVYEIGIPYMDKRYQAAELMLLQKTCEMMNVPLPRIVEKPDNYNQIQRIRELKPDLAITGMAHANPLEARGISTKWSVEFTFAQIHGFTNARDILELVTRPLRRNQSLHELGWNNLVKVNSQ.

Positions 22, 47, and 107 each coordinate [4Fe-4S] cluster.

Belongs to the BchN/ChlN family. As to quaternary structure, protochlorophyllide reductase is composed of three subunits; ChlL, ChlN and ChlB. Forms a heterotetramer of two ChlB and two ChlN subunits. It depends on [4Fe-4S] cluster as a cofactor.

Its subcellular location is the plastid. The protein resides in the chloroplast. The catalysed reaction is chlorophyllide a + oxidized 2[4Fe-4S]-[ferredoxin] + 2 ADP + 2 phosphate = protochlorophyllide a + reduced 2[4Fe-4S]-[ferredoxin] + 2 ATP + 2 H2O. The protein operates within porphyrin-containing compound metabolism; chlorophyll biosynthesis (light-independent). Its function is as follows. Component of the dark-operative protochlorophyllide reductase (DPOR) that uses Mg-ATP and reduced ferredoxin to reduce ring D of protochlorophyllide (Pchlide) to form chlorophyllide a (Chlide). This reaction is light-independent. The NB-protein (ChlN-ChlB) is the catalytic component of the complex. This Chara vulgaris (Common stonewort) protein is Light-independent protochlorophyllide reductase subunit N.